Here is a 309-residue protein sequence, read N- to C-terminus: Foldase protein PrsA 2 (309 aa).

A signal peptide spans 1–22 (MKQMNKLITGVVTLATVVTLSA). Residue Cys23 is the site of N-palmitoyl cysteine attachment. The S-diacylglycerol cysteine moiety is linked to residue Cys23. Positions 146-241 (TPTMTAEIMQ…RTYHIIKVTK (96 aa)) constitute a PpiC domain.

Belongs to the PrsA family.

The protein resides in the cell membrane. The catalysed reaction is [protein]-peptidylproline (omega=180) = [protein]-peptidylproline (omega=0). In terms of biological role, plays a major role in protein secretion by helping the post-translocational extracellular folding of several secreted proteins. The protein is Foldase protein PrsA 2 (prsA2) of Streptococcus pyogenes serotype M3 (strain ATCC BAA-595 / MGAS315).